Reading from the N-terminus, the 556-residue chain is Transcription factor IIIB 70 kDa subunit (556 aa).

A TFIIB-type zinc finger spans residues 8–41 (SSRKCKNCGSTDFVRDISNTTNELICKVCGLVTE). Residues C12, C15, C33, and C36 each coordinate Zn(2+). A run of 2 repeats spans residues 98 to 174 (LKAV…TFLK) and 193 to 272 (IQHF…RLNE). The segment at 98–272 (LKAVSYALNI…EETLQQRLNE (175 aa)) is interaction with TBP and with the Pol III subunit C34. Residues 284-556 (KEFRDDETEV…DAINGLFGQK (273 aa)) are interaction with TBP. 2 disordered regions span residues 287-309 (RDDE…SFDK) and 477-501 (ADLA…QSSA). A compositionally biased stretch (basic and acidic residues) spans 295 to 309 (EGERSAESKPPSFDK). Positions 486 to 495 (LRKKRSKRTN) are enriched in basic residues.

The protein belongs to the TFIIB family. In terms of assembly, TFIIIB comprises the TATA-binding protein (TBP), the B-related factor (BRF) and a 70 kDa polypeptide.

It is found in the nucleus. In terms of biological role, general activator of RNA polymerase III transcription. Interacts with TBP. Binds to Pol III subunit C34 and to the TAU135 component of TFIIIC. This chain is Transcription factor IIIB 70 kDa subunit (TDS4), found in Kluyveromyces lactis (strain ATCC 8585 / CBS 2359 / DSM 70799 / NBRC 1267 / NRRL Y-1140 / WM37) (Yeast).